The chain runs to 326 residues: 3-dehydrosphinganine reductase TSC10A (326 aa).

The Lumenal segment spans residues Met1–Leu7. A helical transmembrane segment spans residues Phe8 to Val28. At Arg29–Asn264 the chain is on the cytoplasmic side. NADPH-binding residues include Gly46, Ser48, Ser49, Gly50, Arg71, Lys75, and Asp97. Residues Gly46–Gly50 carry the GXSXG motif. The active-site Proton donor is the Ser174. Catalysis depends on Tyr188, which acts as the Proton acceptor. 2 residues coordinate NADP(+): Tyr188 and Lys192. The Lowers pKa of active site Tyr role is filled by Lys192. The chain crosses the membrane as a helical span at residues Phe265–Pro285. Residues Gln286 to Ser288 are Lumenal-facing. A helical transmembrane segment spans residues Phe289–Phe309. Residues Gln310 to Lys326 are Cytoplasmic-facing.

The protein belongs to the short-chain dehydrogenases/reductases (SDR) family. Expressed in roots, leaves, stems, flowers and siliques.

Its subcellular location is the endoplasmic reticulum membrane. It catalyses the reaction sphinganine + NADP(+) = 3-oxosphinganine + NADPH + H(+). The protein operates within lipid metabolism; sphingolipid metabolism. Catalyzes the reduction of 3'-oxosphinganine (3-ketodihydrosphingosine/KDS) to sphinganine (dihydrosphingosine/DHS), the second step of de novo sphingolipid biosynthesis. In plants, sphingolipids seems to play a critical role in mineral ion homeostasis, most likely through their involvement in the ion transport functionalities of membrane systems in the root. Lacks stereospecificity and can also produce L-threo-DHS in addition to D-erythro-DHS. This Arabidopsis thaliana (Mouse-ear cress) protein is 3-dehydrosphinganine reductase TSC10A (TSC10A).